A 21-amino-acid chain; its full sequence is Azemiopsin (21 aa).

Residues 1 to 14 (DNWWPKPPHQGPRP) show a composition bias toward pro residues. A disordered region spans residues 1–21 (DNWWPKPPHQGPRPPRPRPKP). Implicated in receptor binding stretches follow at residues 3–6 (WWPK), 8–11 (PHQG), and 13–14 (RP).

As to quaternary structure, monomer. Expressed by the venom gland.

It is found in the secreted. Functionally, in vitro, reversibly blocks human muscle-type nicotinic acetylcholine receptors (nAChR) alpha-1-beta-1-epsilon-delta/CHRNA1-CHRNB1-CHRNE-CHRND (EC(50)=0.44 uM) and alpha-1-beta-1-gamma-delta/CHRNA1-CHRNB1-CHRNG-CHRND (EC(50)=1.56 uM). Binds to nAChR from T.californica (IC(50)=0.03-0.18 uM), human neuronal nAChR alpha-7/CHRNA7 (IC(50)=22 uM) and acetylcholine-binding proteins (AChBP) from L.stagnalis (IC(50)=63 uM) and A.californica (IC(50)=230 uM). The protein is Azemiopsin of Azemiops feae (Fea's viper).